The following is a 310-amino-acid chain: UPF0761 membrane protein VF_0100 (310 aa).

Transmembrane regions (helical) follow at residues 34 to 54, 97 to 117, 136 to 156, 178 to 198, 207 to 227, and 242 to 262; these read YMAY…LSVL, MTAV…SSID, FSLY…SLAA, LLGW…YLLV, HALI…VGFA, and ALAA…IVLI.

The protein belongs to the UPF0761 family.

The protein resides in the cell inner membrane. The protein is UPF0761 membrane protein VF_0100 of Aliivibrio fischeri (strain ATCC 700601 / ES114) (Vibrio fischeri).